A 432-amino-acid chain; its full sequence is Adenylosuccinate synthetase (432 aa).

Residues 13-19 (GDEGKGK) and 41-43 (GHT) each bind GTP. Asp14 functions as the Proton acceptor in the catalytic mechanism. Asp14 and Gly41 together coordinate Mg(2+). Residues 14–17 (DEGK), 39–42 (NAGH), Thr130, Arg144, Gln225, Thr240, and Arg304 contribute to the IMP site. His42 functions as the Proton donor in the catalytic mechanism. 300 to 306 (ATTGRRR) provides a ligand contact to substrate. GTP contacts are provided by residues Arg306, 332-334 (KLD), and 415-417 (STG).

The protein belongs to the adenylosuccinate synthetase family. In terms of assembly, homodimer. Mg(2+) is required as a cofactor.

Its subcellular location is the cytoplasm. The catalysed reaction is IMP + L-aspartate + GTP = N(6)-(1,2-dicarboxyethyl)-AMP + GDP + phosphate + 2 H(+). It participates in purine metabolism; AMP biosynthesis via de novo pathway; AMP from IMP: step 1/2. Functionally, plays an important role in the de novo pathway of purine nucleotide biosynthesis. Catalyzes the first committed step in the biosynthesis of AMP from IMP. In Edwardsiella ictaluri (strain 93-146), this protein is Adenylosuccinate synthetase.